The sequence spans 127 residues: MKDPSRSSTSPSIISEDVIINGHSHEDDNPFAEYMWMENEEEFNRQIEEELWEEEFIERCFQEMLEEEEEHEWFIPARDLPQTMDQIQDQFNDLVISDSSSLEDLVVKSNLNPNAKEFVPGVKYLNI.

Low complexity predominate over residues 1-15; sequence MKDPSRSSTSPSIIS. The tract at residues 1–24 is disordered; that stretch reads MKDPSRSSTSPSIISEDVIINGHS. The interval 22 to 75 is PABPC1-interacting motif-1 (PAM1); sequence GHSHEDDNPFAEYMWMENEEEFNRQIEEELWEEEFIERCFQEMLEEEEEHEWFI. The tract at residues 105–120 is PABPC1-interacting motif-2 (PAM2); sequence LVVKSNLNPNAKEFVP.

The protein belongs to the PAIP2 family. In terms of processing, ubiquitinated, leading to its degradation by the proteasome.

Its subcellular location is the cytoplasm. In terms of biological role, acts as a repressor in the regulation of translation initiation of poly(A)-containing mRNAs. Its inhibitory activity on translation is mediated via its action on PABPC1. Displaces the interaction of PABPC1 with poly(A) RNA and competes with PAIP1 for binding to PABPC1. Its association with PABPC1 results in disruption of the cytoplasmic poly(A) RNP structure organization. This Gallus gallus (Chicken) protein is Polyadenylate-binding protein-interacting protein 2 (PAIP2).